The sequence spans 292 residues: tRNA pseudouridine synthase B (292 aa).

The Nucleophile role is filled by Asp-40.

It belongs to the pseudouridine synthase TruB family. Type 1 subfamily.

It catalyses the reaction uridine(55) in tRNA = pseudouridine(55) in tRNA. Responsible for synthesis of pseudouridine from uracil-55 in the psi GC loop of transfer RNAs. The chain is tRNA pseudouridine synthase B from Mycoplasma capricolum subsp. capricolum (strain California kid / ATCC 27343 / NCTC 10154).